The primary structure comprises 269 residues: Cell cycle regulator CcrZ (269 aa).

ATP is bound by residues Phe39, His76, Trp77, Met78, and Gly80. The Brenner's motif [HXDhX3N] motif lies at His164–Asn171. Asp166 functions as the Proton acceptor in the catalytic mechanism. The short motif at Leu180–His203 is the APH element.

This sequence belongs to the aminoglycoside phosphotransferase family. As to quaternary structure, monomer in solution. Interacts with DnaA (via domains I (1-82) and III (111-326)). Interacts with DnaB. Interacts with FtsZ.

The protein localises to the cytoplasm. The enzyme catalyses D-ribose + ATP = D-ribose 5-phosphate + ADP + H(+). It catalyses the reaction 2-deoxy-D-ribose + ATP = 2-deoxy-D-ribose 5-phosphate + ADP + H(+). Its activity is regulated as follows. Activated by D-ribose and 2-deoxy-D-ribose. Slightly activated by kanamycin and gentamicin. Functionally, plays a role in cell cycle regulation and chromosome integrity. Activates DnaA-dependent chromosomal DNA replication initiation ensuring that the chromosome is replicated at the right time during the cell cycle. May regulate replication initiation through phosphorylation of a possible second messenger or metabolite, and by interacting with replication initiation proteins. Has ATPase activity with D-ribose and 2-deoxy-D-ribose in vitro, but not with choline. Involved in DNA damage response. The chain is Cell cycle regulator CcrZ from Bacillus subtilis (strain 168).